The primary structure comprises 366 residues: Erythronate-4-phosphate dehydrogenase (366 aa).

Residues Ser-46 and Thr-67 each coordinate substrate. Asp-147 and Thr-175 together coordinate NAD(+). Arg-208 is an active-site residue. An NAD(+)-binding site is contributed by Asp-228. The active site involves Glu-233. The Proton donor role is filled by His-250. Residue Gly-253 participates in NAD(+) binding. Tyr-254 serves as a coordination point for substrate.

The protein belongs to the D-isomer specific 2-hydroxyacid dehydrogenase family. PdxB subfamily. As to quaternary structure, homodimer.

Its subcellular location is the cytoplasm. It carries out the reaction 4-phospho-D-erythronate + NAD(+) = (R)-3-hydroxy-2-oxo-4-phosphooxybutanoate + NADH + H(+). It participates in cofactor biosynthesis; pyridoxine 5'-phosphate biosynthesis; pyridoxine 5'-phosphate from D-erythrose 4-phosphate: step 2/5. In terms of biological role, catalyzes the oxidation of erythronate-4-phosphate to 3-hydroxy-2-oxo-4-phosphonooxybutanoate. This Coxiella burnetii (strain RSA 331 / Henzerling II) protein is Erythronate-4-phosphate dehydrogenase.